A 154-amino-acid polypeptide reads, in one-letter code: Probable transcription factor At4g00232 (154 aa).

Residues 1-44 (MDKANTNRSKVCGGSGEAKLTGKKRKNVSAKQSKKDAKKENSQM) are disordered.

It belongs to the GeBP family.

The sequence is that of Probable transcription factor At4g00232 from Arabidopsis thaliana (Mouse-ear cress).